The chain runs to 375 residues: Probable protein-glutamate methylesterase BB_0415 (375 aa).

The Response regulatory domain maps to serine 6–isoleucine 120. One can recognise a CheB-type methylesterase domain in the interval lysine 183–serine 375. Active-site residues include serine 195, histidine 221, and aspartate 317.

It catalyses the reaction [protein]-L-glutamate 5-O-methyl ester + H2O = L-glutamyl-[protein] + methanol + H(+). This Borreliella burgdorferi (strain ATCC 35210 / DSM 4680 / CIP 102532 / B31) (Borrelia burgdorferi) protein is Probable protein-glutamate methylesterase BB_0415.